The sequence spans 670 residues: Oligopeptidase PepF (670 aa).

H456 contacts Zn(2+). E457 is a catalytic residue. Zn(2+) is bound by residues H460 and H463.

The protein belongs to the peptidase M3B family. It depends on Zn(2+) as a cofactor.

Its subcellular location is the cytoplasm. Overexpression results in inhibition of sporulation initiation. This sporulation deficiency could be the result of hydrolysis by PepF of the PhrA peptide, a phosphatase regulator. Thus, overexpression of PepF appears to act at the level of the phosphorelay, most likely through modulation of the negative role played by phosphatases. Overexpression of PepF also affects the activity of the competence and sporulation stimulating factor PhrC. This is Oligopeptidase PepF from Bacillus subtilis (strain 168).